The primary structure comprises 359 residues: DNA integrity scanning protein DisA (359 aa).

The DAC domain maps to 7-145 (DPTGRAVLRA…DGRRWVLEDS (139 aa)). Residues Gly-74, Leu-92, and 105–109 (TRHRT) contribute to the ATP site.

The protein belongs to the DisA family. As to quaternary structure, homooctamer. Requires Mg(2+) as cofactor.

The catalysed reaction is 2 ATP = 3',3'-c-di-AMP + 2 diphosphate. Participates in a DNA-damage check-point. DisA forms globular foci that rapidly scan along the chromosomes searching for lesions. Its function is as follows. Also has diadenylate cyclase activity, catalyzing the condensation of 2 ATP molecules into cyclic di-AMP (c-di-AMP). c-di-AMP likely acts as a signaling molecule that may couple DNA integrity with a cellular process. This is DNA integrity scanning protein DisA from Beutenbergia cavernae (strain ATCC BAA-8 / DSM 12333 / CCUG 43141 / JCM 11478 / NBRC 16432 / NCIMB 13614 / HKI 0122).